The chain runs to 303 residues: Putative S-adenosyl-L-methionine-dependent methyltransferase SCO6443 (303 aa).

S-adenosyl-L-methionine contacts are provided by residues aspartate 130 and 159–160 (DL).

This sequence belongs to the UPF0677 family.

Functionally, exhibits S-adenosyl-L-methionine-dependent methyltransferase activity. This chain is Putative S-adenosyl-L-methionine-dependent methyltransferase SCO6443, found in Streptomyces coelicolor (strain ATCC BAA-471 / A3(2) / M145).